The sequence spans 159 residues: uncharacterized protein (159 aa).

Residues 4–24 (QIALILSLIILIFFIYKFAMF) traverse the membrane as a helical segment.

The protein localises to the membrane. This is an uncharacterized protein from Acheta domesticus (House cricket).